The primary structure comprises 598 residues: NADH-quinone oxidoreductase subunit C/D (598 aa).

An NADH dehydrogenase I subunit C region spans residues 1–189; that stretch reads MTDLTTSDSL…DPYVLTKQKE (189 aa). Residues 213–598 form an NADH dehydrogenase I subunit D region; that stretch reads DFMFLNLGPN…IDFVMSDVDR (386 aa).

In the N-terminal section; belongs to the complex I 30 kDa subunit family. This sequence in the C-terminal section; belongs to the complex I 49 kDa subunit family. As to quaternary structure, NDH-1 is composed of 13 different subunits. Subunits NuoB, CD, E, F, and G constitute the peripheral sector of the complex.

It is found in the cell inner membrane. The catalysed reaction is a quinone + NADH + 5 H(+)(in) = a quinol + NAD(+) + 4 H(+)(out). Functionally, NDH-1 shuttles electrons from NADH, via FMN and iron-sulfur (Fe-S) centers, to quinones in the respiratory chain. The immediate electron acceptor for the enzyme in this species is believed to be ubiquinone. Couples the redox reaction to proton translocation (for every two electrons transferred, four hydrogen ions are translocated across the cytoplasmic membrane), and thus conserves the redox energy in a proton gradient. The sequence is that of NADH-quinone oxidoreductase subunit C/D from Yersinia pseudotuberculosis serotype O:1b (strain IP 31758).